The following is a 209-amino-acid chain: Small ribosomal subunit protein uS3 (209 aa).

Residues 38–107 (IRKFIKNKYY…RVVINIEEIK (70 aa)) enclose the KH type-2 domain.

The protein belongs to the universal ribosomal protein uS3 family. In terms of assembly, part of the 30S ribosomal subunit. Forms a tight complex with proteins S10 and S14.

Its function is as follows. Binds the lower part of the 30S subunit head. Binds mRNA in the 70S ribosome, positioning it for translation. This chain is Small ribosomal subunit protein uS3, found in Thermotoga sp. (strain RQ2).